A 344-amino-acid chain; its full sequence is Holliday junction branch migration complex subunit RuvB (344 aa).

Residues 1–10 (MAIQSSSSGS) are compositionally biased toward low complexity. The interval 1 to 37 (MAIQSSSSGSKPPAPKRLVAPEATAAEGDGGRDEGLR) is disordered. A large ATPase domain (RuvB-L) region spans residues 13–197 (PAPKRLVAPE…FGLIQRLEFY (185 aa)). ATP contacts are provided by residues Leu-36, Arg-37, Gly-78, Lys-81, Thr-82, Thr-83, 144–146 (EDF), Arg-187, Tyr-197, and Arg-234. A Mg(2+)-binding site is contributed by Thr-82. A small ATPAse domain (RuvB-S) region spans residues 198-268 (SCSDLEAIVS…VVVEALAMHR (71 aa)). The tract at residues 271–344 (GRGLDPSDRR…DAGRAHLEAA (74 aa)) is head domain (RuvB-H). Residues Arg-326 and Arg-331 each coordinate DNA.

It belongs to the RuvB family. In terms of assembly, homohexamer. Forms an RuvA(8)-RuvB(12)-Holliday junction (HJ) complex. HJ DNA is sandwiched between 2 RuvA tetramers; dsDNA enters through RuvA and exits via RuvB. An RuvB hexamer assembles on each DNA strand where it exits the tetramer. Each RuvB hexamer is contacted by two RuvA subunits (via domain III) on 2 adjacent RuvB subunits; this complex drives branch migration. In the full resolvosome a probable DNA-RuvA(4)-RuvB(12)-RuvC(2) complex forms which resolves the HJ.

The protein localises to the cytoplasm. The catalysed reaction is ATP + H2O = ADP + phosphate + H(+). Functionally, the RuvA-RuvB-RuvC complex processes Holliday junction (HJ) DNA during genetic recombination and DNA repair, while the RuvA-RuvB complex plays an important role in the rescue of blocked DNA replication forks via replication fork reversal (RFR). RuvA specifically binds to HJ cruciform DNA, conferring on it an open structure. The RuvB hexamer acts as an ATP-dependent pump, pulling dsDNA into and through the RuvAB complex. RuvB forms 2 homohexamers on either side of HJ DNA bound by 1 or 2 RuvA tetramers; 4 subunits per hexamer contact DNA at a time. Coordinated motions by a converter formed by DNA-disengaged RuvB subunits stimulates ATP hydrolysis and nucleotide exchange. Immobilization of the converter enables RuvB to convert the ATP-contained energy into a lever motion, pulling 2 nucleotides of DNA out of the RuvA tetramer per ATP hydrolyzed, thus driving DNA branch migration. The RuvB motors rotate together with the DNA substrate, which together with the progressing nucleotide cycle form the mechanistic basis for DNA recombination by continuous HJ branch migration. Branch migration allows RuvC to scan DNA until it finds its consensus sequence, where it cleaves and resolves cruciform DNA. In Synechococcus sp. (strain RCC307), this protein is Holliday junction branch migration complex subunit RuvB.